Consider the following 298-residue polypeptide: Thymidylate synthase (298 aa).

DUMP-binding positions include R25 and 159-160 (RR). The active-site Nucleophile is the C179. DUMP is bound by residues 200-203 (RSVD), N211, and 241-243 (HLY). D203 is a (6R)-5,10-methylene-5,6,7,8-tetrahydrofolate binding site. (6R)-5,10-methylene-5,6,7,8-tetrahydrofolate is bound at residue A297.

Belongs to the thymidylate synthase family. Bacterial-type ThyA subfamily. As to quaternary structure, homodimer.

The protein localises to the cytoplasm. It carries out the reaction dUMP + (6R)-5,10-methylene-5,6,7,8-tetrahydrofolate = 7,8-dihydrofolate + dTMP. It participates in pyrimidine metabolism; dTTP biosynthesis. In terms of biological role, catalyzes the reductive methylation of 2'-deoxyuridine-5'-monophosphate (dUMP) to 2'-deoxythymidine-5'-monophosphate (dTMP) while utilizing 5,10-methylenetetrahydrofolate (mTHF) as the methyl donor and reductant in the reaction, yielding dihydrofolate (DHF) as a by-product. This enzymatic reaction provides an intracellular de novo source of dTMP, an essential precursor for DNA biosynthesis. In Cereibacter sphaeroides (strain ATCC 17025 / ATH 2.4.3) (Rhodobacter sphaeroides), this protein is Thymidylate synthase.